A 231-amino-acid chain; its full sequence is 7-cyano-7-deazaguanine synthase (231 aa).

8–18 provides a ligand contact to ATP; sequence FSGGQDSTTCL. Cys-188, Cys-197, Cys-200, and Cys-203 together coordinate Zn(2+).

The protein belongs to the QueC family. Zn(2+) is required as a cofactor.

The enzyme catalyses 7-carboxy-7-deazaguanine + NH4(+) + ATP = 7-cyano-7-deazaguanine + ADP + phosphate + H2O + H(+). It participates in purine metabolism; 7-cyano-7-deazaguanine biosynthesis. Its function is as follows. Catalyzes the ATP-dependent conversion of 7-carboxy-7-deazaguanine (CDG) to 7-cyano-7-deazaguanine (preQ(0)). The chain is 7-cyano-7-deazaguanine synthase from Salmonella paratyphi A (strain ATCC 9150 / SARB42).